The chain runs to 972 residues: Multiple C2 domain and transmembrane region protein 8 (972 aa).

Positions 1–107 (MMSNLKLGVE…PYSEAVGLPY (107 aa)) constitute a C2 1 domain. A disordered region spans residues 142–203 (PNLISTKKIP…MMESSLYQAP (62 aa)). Basic residues predominate over residues 150-159 (IPSKSRHKFH). The span at 161-173 (IPTNESNHSPRGN) shows a compositional bias: polar residues. Positions 179-194 (PQPPPPQSQTALPPPM) are enriched in pro residues. 3 consecutive C2 domains span residues 232–352 (GGGK…PEWY), 384–507 (ALNA…NRWF), and 543–669 (YSSD…SHSY). Ca(2+)-binding residues include aspartate 265, aspartate 271, aspartate 318, aspartate 320, and aspartate 325. Helical transmembrane passes span 803–823 (IIFL…SLCL) and 924–944 (TVVL…LYIM).

It belongs to the MCTP family. The cofactor is Ca(2+). In terms of tissue distribution, expressed in root hairs.

The protein localises to the membrane. Its subcellular location is the vesicle. Its function is as follows. May function as a signaling molecule by regulating the trafficking of other regulators. The polypeptide is Multiple C2 domain and transmembrane region protein 8 (Arabidopsis thaliana (Mouse-ear cress)).